Reading from the N-terminus, the 649-residue chain is tRNA-guanine(15) transglycosylase (649 aa).

Aspartate 88 serves as the catalytic Nucleophile. Positions 123 and 194 each coordinate substrate. Residues cysteine 280, cysteine 282, and cysteine 285 each coordinate Zn(2+). One can recognise a PUA domain in the interval 573-648 (KYRIVIDSSV…VAATLRGGLK (76 aa)).

The protein belongs to the archaeosine tRNA-ribosyltransferase family. Requires Zn(2+) as cofactor.

The catalysed reaction is guanosine(15) in tRNA + 7-cyano-7-deazaguanine = 7-cyano-7-carbaguanosine(15) in tRNA + guanine. Its pathway is tRNA modification; archaeosine-tRNA biosynthesis. Its function is as follows. Exchanges the guanine residue with 7-cyano-7-deazaguanine (preQ0) at position 15 in the dihydrouridine loop (D-loop) of archaeal tRNAs. This chain is tRNA-guanine(15) transglycosylase, found in Methanococcus maripaludis (strain C6 / ATCC BAA-1332).